The sequence spans 209 residues: Dof zinc finger protein DOF1.6 (209 aa).

Polar residues predominate over residues 1–17; that stretch reads MPSEPNQTRPTRVQPST. Residues 1-29 form a disordered region; the sequence is MPSEPNQTRPTRVQPSTAAYPPPNLAEPL. Residues 20–29 show a composition bias toward pro residues; the sequence is YPPPNLAEPL. The Dof-type zinc-finger motif lies at 29-83; it reads LPCPRCNSTTTKFCYYNNYNLAQPRYYCKSCRRYWTQGGTLRDVPVGGGTRRSSS. Residues cysteine 31, cysteine 34, cysteine 56, and cysteine 59 each coordinate Zn(2+). The disordered stretch occupies residues 70–116; that stretch reads RDVPVGGGTRRSSSKRHRSFSTTATSSSSSSSVITTTTQEPATTEAS. Residues 89-116 are compositionally biased toward low complexity; sequence FSTTATSSSSSSSVITTTTQEPATTEAS.

The protein resides in the nucleus. Transcription factor that binds specifically to a 5'-AA[AG]G-3' consensus core sequence. In Arabidopsis thaliana (Mouse-ear cress), this protein is Dof zinc finger protein DOF1.6 (DOF1.6).